A 303-amino-acid chain; its full sequence is Secreted mono- and diacylglycerol lipase LIP4 (303 aa).

A signal peptide spans 1-16 (MHFLAFLLCLIPLALC). A disulfide bond links Cys-54 and Cys-293. Ser-167 (nucleophile) is an active-site residue. The active site involves Asp-224.

This sequence belongs to the AB hydrolase superfamily. Lipase family. Class 3 subfamily.

The protein localises to the secreted. It catalyses the reaction a monoacylglycerol + H2O = glycerol + a fatty acid + H(+). The catalysed reaction is a diacylglycerol + H2O = a monoacylglycerol + a fatty acid + H(+). Secreted lipase involved in Dandruff and seborrheic dermatitis (D/SD) probably via lipase-mediated breakdown of sebaceous lipids and release of irritating free fatty acids. Shows activity against monoglyceride and diglyceride substrates. Due to an absence of fatty acid synthase genes in Malassezia species, secretory lipases are essential for the yeast to generate free fatty acids from degradation of sebum and assimilate them as lipid sources for growth. Plays an essential role at the pathogen-host interface during disease progression. The polypeptide is Secreted mono- and diacylglycerol lipase LIP4 (Malassezia restricta (strain ATCC 96810 / NBRC 103918 / CBS 7877) (Seborrheic dermatitis infection agent)).